The primary structure comprises 68 residues: Large ribosomal subunit protein uL30 (68 aa).

It belongs to the universal ribosomal protein uL30 family. In terms of assembly, part of the 50S ribosomal subunit.

The polypeptide is Large ribosomal subunit protein uL30 (Paenarthrobacter aurescens (strain TC1)).